We begin with the raw amino-acid sequence, 461 residues long: Dihydrolipoyl dehydrogenase (461 aa).

Residues 34–42, Lys51, and Gly114 each bind FAD; that span reads EEDQAGGTC. Cys42 and Cys47 are oxidised to a cystine. NAD(+) is bound by residues 177–181, Glu200, and 261–264; these read GGGVI and AIGR. FAD-binding residues include Asp304 and Ala312. Residue His436 is the Proton acceptor of the active site.

It belongs to the class-I pyridine nucleotide-disulfide oxidoreductase family. The cofactor is FAD.

It localises to the cytoplasm. The enzyme catalyses N(6)-[(R)-dihydrolipoyl]-L-lysyl-[protein] + NAD(+) = N(6)-[(R)-lipoyl]-L-lysyl-[protein] + NADH + H(+). The branched-chain alpha-keto dehydrogenase complex catalyzes the overall conversion of alpha-keto acids to acyl-CoA and CO(2). It contains multiple copies of 3 enzymatic components: branched-chain alpha-keto acid decarboxylase (E1), lipoamide acyltransferase (E2) and lipoamide dehydrogenase (E3). The protein is Dihydrolipoyl dehydrogenase (lpdA) of Chlamydia pneumoniae (Chlamydophila pneumoniae).